A 228-amino-acid chain; its full sequence is Ribose-5-phosphate isomerase A (228 aa).

Substrate-binding positions include 32-35, 85-88, and 98-101; these read TGST, DGAD, and KGGG. E107 serves as the catalytic Proton acceptor. K125 contributes to the substrate binding site.

This sequence belongs to the ribose 5-phosphate isomerase family. In terms of assembly, homodimer.

The catalysed reaction is aldehydo-D-ribose 5-phosphate = D-ribulose 5-phosphate. Its pathway is carbohydrate degradation; pentose phosphate pathway; D-ribose 5-phosphate from D-ribulose 5-phosphate (non-oxidative stage): step 1/1. In terms of biological role, catalyzes the reversible conversion of ribose-5-phosphate to ribulose 5-phosphate. This Cupriavidus pinatubonensis (strain JMP 134 / LMG 1197) (Cupriavidus necator (strain JMP 134)) protein is Ribose-5-phosphate isomerase A.